An 804-amino-acid chain; its full sequence is ABC transporter aclQ (804 aa).

The next 9 membrane-spanning stretches (helical) occupy residues 3–23, 52–72, 97–117, 119–139, 155–175, 206–226, 239–259, 349–369, and 373–393; these read LAVLTLALCWAYPVTIYISYL, FTAIFWLQLVQCFDLAISITI, IAVFMFLAAGLLPDPDVPFSP, LSHSHAWIAGIIMEALQLAMF, LQLGLVMVRLVLFVAMVALYF, HGGWLDYVVGFSTLFPFLWPS, FVLLVIQRVVNILVPHQLGIV, LVFQLFPMVADLWIAALYFLI, and AFYSLIVITVTWLYLFVTIYM. Residues 236–518 form the ABC transmembrane type-1 domain; the sequence is IFCFVLLVIQ…FGSFYTQVQN (283 aa). N-linked (GlcNAc...) asparagine glycosylation occurs at Asn-460. 2 helical membrane-spanning segments follow: residues 464 to 484 and 489 to 509; these read NLLFTAGVAIVCLLCAYQISA and VAMFVTLLTYLAQLQAPLNFF. The region spanning 552–786 is the ABC transporter domain; it reads VEFTHVNFAY…NGMYSQMWAK (235 aa). An ATP-binding site is contributed by 585-592; it reads GESGSGKS. N-linked (GlcNAc...) asparagine glycans are attached at residues Asn-639 and Asn-797.

This sequence belongs to the ABC transporter superfamily. ABCB family. Heavy Metal importer (TC 3.A.1.210) subfamily.

It is found in the membrane. ABC transporter; part of the gene cluster that mediates the biosynthesis of aspirochlorine (or antibiotic A30641), an unusual halogenated spiro compound with distinctive antifungal properties due to selective inhibition of protein biosynthesis, and which is also active against bacteria, viruses, and murine tumor cells. The chain is ABC transporter aclQ from Aspergillus oryzae (strain ATCC 42149 / RIB 40) (Yellow koji mold).